The chain runs to 298 residues: Cobalt-precorrin-5B C(1)-methyltransferase (298 aa).

This sequence belongs to the CbiD family.

It catalyses the reaction Co-precorrin-5B + S-adenosyl-L-methionine = Co-precorrin-6A + S-adenosyl-L-homocysteine. Its pathway is cofactor biosynthesis; adenosylcobalamin biosynthesis; cob(II)yrinate a,c-diamide from sirohydrochlorin (anaerobic route): step 6/10. Functionally, catalyzes the methylation of C-1 in cobalt-precorrin-5B to form cobalt-precorrin-6A. This Archaeoglobus fulgidus (strain ATCC 49558 / DSM 4304 / JCM 9628 / NBRC 100126 / VC-16) protein is Cobalt-precorrin-5B C(1)-methyltransferase.